Here is a 23-residue protein sequence, read N- to C-terminus: Ocellatin-LB2 (23 aa).

The residue at position 23 (N23) is an Asparagine amide.

As to expression, expressed by the skin glands.

The protein localises to the secreted. Antibacterial peptide that inhibits the Gram-negative bacterium A.actinomycetemcomitans ATCC 29522 (MIC=210 uM). No activity against the bacteria E.coli ATCC 25922 and S.aureus ATCC 25923, or the fungi C.albicans ATCC 18804 and C.lusitaniae ATCC 56936. Does not show hemolytic activity towards rabbit erythrocytes. This is Ocellatin-LB2 from Leptodactylus labyrinthicus (Labyrinth frog).